Here is a 235-residue protein sequence, read N- to C-terminus: Lipoprotein-releasing system ATP-binding protein LolD (235 aa).

The region spanning 5 to 235 is the ABC transporter domain; that stretch reads FALANIYKSF…SIDESGFNKI (231 aa). Residue 40 to 47 coordinates ATP; it reads GKSGSGKS.

The protein belongs to the ABC transporter superfamily. Lipoprotein translocase (TC 3.A.1.125) family. In terms of assembly, the complex is composed of two ATP-binding proteins (LolD) and two transmembrane proteins (LolC and LolE).

The protein resides in the cell inner membrane. Its function is as follows. Part of the ABC transporter complex LolCDE involved in the translocation of mature outer membrane-directed lipoproteins, from the inner membrane to the periplasmic chaperone, LolA. Responsible for the formation of the LolA-lipoprotein complex in an ATP-dependent manner. The sequence is that of Lipoprotein-releasing system ATP-binding protein LolD from Ehrlichia chaffeensis (strain ATCC CRL-10679 / Arkansas).